A 277-amino-acid chain; its full sequence is Bifunctional protein FolD (277 aa).

Residues 164–166 (GRS), Ser-189, and Thr-230 contribute to the NADP(+) site.

It belongs to the tetrahydrofolate dehydrogenase/cyclohydrolase family. As to quaternary structure, homodimer.

It carries out the reaction (6R)-5,10-methylene-5,6,7,8-tetrahydrofolate + NADP(+) = (6R)-5,10-methenyltetrahydrofolate + NADPH. The catalysed reaction is (6R)-5,10-methenyltetrahydrofolate + H2O = (6R)-10-formyltetrahydrofolate + H(+). It functions in the pathway one-carbon metabolism; tetrahydrofolate interconversion. Its function is as follows. Catalyzes the oxidation of 5,10-methylenetetrahydrofolate to 5,10-methenyltetrahydrofolate and then the hydrolysis of 5,10-methenyltetrahydrofolate to 10-formyltetrahydrofolate. The polypeptide is Bifunctional protein FolD (Clostridium perfringens (strain 13 / Type A)).